Here is a 244-residue protein sequence, read N- to C-terminus: Ribonuclease PH (244 aa).

Phosphate contacts are provided by residues Arg90 and 128–130; that span reads GTR.

The protein belongs to the RNase PH family. Homohexameric ring arranged as a trimer of dimers.

It carries out the reaction tRNA(n+1) + phosphate = tRNA(n) + a ribonucleoside 5'-diphosphate. Functionally, phosphorolytic 3'-5' exoribonuclease that plays an important role in tRNA 3'-end maturation. Removes nucleotide residues following the 3'-CCA terminus of tRNAs; can also add nucleotides to the ends of RNA molecules by using nucleoside diphosphates as substrates, but this may not be physiologically important. Probably plays a role in initiation of 16S rRNA degradation (leading to ribosome degradation) during starvation. The protein is Ribonuclease PH of Prochlorococcus marinus (strain MIT 9313).